The following is a 273-amino-acid chain: MSLEEQRTRDELKHKLLDLNQLHEQLAELRTICPSLLKLLHPETGTSRKFEKSAQEAIEKVNSFYTHLKSSQNVFDYAEKSLQADSSNLLPTYLYNSEDLSNDTENNETKSINGKSALDLKEPHHSELHDNDNFQNSDINIESFKGDIEASGSILTTHENKSFTLKLANELEFIFFHDTRGKFSVYCSSSKDDAITFSINRNNNFLGNLWSLMPKILDYQHLYSKPCDFCKSLISPVYLELPSVRRNANSTVKPTSKDILALHAECVPAQSDL.

The protein belongs to the Mediator complex subunit 27 family. In terms of assembly, component of the Mediator complex.

The protein resides in the nucleus. Its function is as follows. Component of the Mediator complex, a coactivator involved in the regulated transcription of nearly all RNA polymerase II-dependent genes. Mediator functions as a bridge to convey information from gene-specific regulatory proteins to the basal RNA polymerase II transcription machinery. Mediator is recruited to promoters by direct interactions with regulatory proteins and serves as a scaffold for the assembly of a functional preinitiation complex with RNA polymerase II and the general transcription factors. In Schizosaccharomyces pombe (strain 972 / ATCC 24843) (Fission yeast), this protein is Mediator of RNA polymerase II transcription subunit 27 (med27).